Here is a 465-residue protein sequence, read N- to C-terminus: Chromosomal replication initiator protein DnaA (465 aa).

Residues 1–84 (MSLSLWQQCL…RFEVGSKPLV (84 aa)) are domain I, interacts with DnaA modulators. The domain II stretch occupies residues 84-128 (VQAISQPAQPHHKQVSAAPQQQVRSAPVRPSWDNSPAQAEHTYRS). The segment at 91–120 (AQPHHKQVSAAPQQQVRSAPVRPSWDNSPA) is disordered. The segment at 129 to 345 (NVNPKHTFDN…GALNRVIANA (217 aa)) is domain III, AAA+ region. ATP is bound by residues Gly-173, Gly-175, Lys-176, and Thr-177. A domain IV, binds dsDNA region spans residues 346–465 (NFTGRSITID…FSNLIRTLSS (120 aa)).

The protein belongs to the DnaA family. Oligomerizes as a right-handed, spiral filament on DNA at oriC.

Its subcellular location is the cytoplasm. Functionally, plays an essential role in the initiation and regulation of chromosomal replication. ATP-DnaA binds to the origin of replication (oriC) to initiate formation of the DNA replication initiation complex once per cell cycle. Binds the DnaA box (a 9 base pair repeat at the origin) and separates the double-stranded (ds)DNA. Forms a right-handed helical filament on oriC DNA; dsDNA binds to the exterior of the filament while single-stranded (ss)DNA is stabiized in the filament's interior. The ATP-DnaA-oriC complex binds and stabilizes one strand of the AT-rich DNA unwinding element (DUE), permitting loading of DNA polymerase. After initiation quickly degrades to an ADP-DnaA complex that is not apt for DNA replication. Binds acidic phospholipids. In Pectobacterium carotovorum subsp. carotovorum (strain PC1), this protein is Chromosomal replication initiator protein DnaA.